The sequence spans 421 residues: Imidazolonepropionase (421 aa).

Residues H81 and H83 each contribute to the Fe(3+) site. Positions 81 and 83 each coordinate Zn(2+). Positions 90, 153, and 186 each coordinate 4-imidazolone-5-propanoate. Y153 is a binding site for N-formimidoyl-L-glutamate. Position 251 (H251) interacts with Fe(3+). Residue H251 coordinates Zn(2+). E254 serves as a coordination point for 4-imidazolone-5-propanoate. Position 326 (D326) interacts with Fe(3+). A Zn(2+)-binding site is contributed by D326. The N-formimidoyl-L-glutamate site is built by N328 and G330. 4-imidazolone-5-propanoate is bound at residue S331.

This sequence belongs to the metallo-dependent hydrolases superfamily. HutI family. Requires Zn(2+) as cofactor. Fe(3+) is required as a cofactor.

Its subcellular location is the cytoplasm. The catalysed reaction is 4-imidazolone-5-propanoate + H2O = N-formimidoyl-L-glutamate. Its pathway is amino-acid degradation; L-histidine degradation into L-glutamate; N-formimidoyl-L-glutamate from L-histidine: step 3/3. In terms of biological role, catalyzes the hydrolytic cleavage of the carbon-nitrogen bond in imidazolone-5-propanoate to yield N-formimidoyl-L-glutamate. It is the third step in the universal histidine degradation pathway. The sequence is that of Imidazolonepropionase from Streptococcus pyogenes serotype M6 (strain ATCC BAA-946 / MGAS10394).